Here is a 328-residue protein sequence, read N- to C-terminus: Integrator complex subunit 12 (328 aa).

The sufficient for binding to IntS1 and IntS9 and for 3'-end snRNA processing stretch occupies residues 1-45 (MAANIAAAAAAAQEVDPVLKKAIKLLHSSNPTSAAELRLLLDEAL). A PHD-type zinc finger spans residues 128–185 (DLNCCVCGEMVFTATNRLIECSKCGAMYHQECHKPPITKEEAADDQEQNWQCDTCCNK). Low complexity-rich tracts occupy residues 215 to 233 (KAKS…NSSS), 241 to 264 (SSST…SSSS), 274 to 283 (KSTAASSLSA), and 292 to 311 (SSGT…SKSS). The tract at residues 215–328 (KAKSSVASSR…GSSSKRRSKQ (114 aa)) is disordered.

It belongs to the Integrator subunit 12 family. Belongs to the multiprotein complex Integrator, at least composed of IntS1, IntS2, IntS3, IntS4, omd/IntS5, IntS6, defl/IntS7, IntS8, IntS9, IntS10, IntS11, IntS12, asun/IntS13, IntS14 and IntS15. The core complex associates with protein phosphatase 2A subunits mts/PP2A and Pp2A-29B, to form the Integrator-PP2A (INTAC) complex. Within the complex, interacts with IntS1 and IntS9. Interaction with IntS1 is likely to be important for promoting 3'-end processing of snRNAs.

Its subcellular location is the nucleus. Its function is as follows. Component of the integrator complex, a multiprotein complex that terminates RNA polymerase II (Pol II) transcription in the promoter-proximal region of genes. The integrator complex provides a quality checkpoint during transcription elongation by driving premature transcription termination of transcripts that are unfavorably configured for transcriptional elongation: the complex terminates transcription by (1) catalyzing dephosphorylation of the C-terminal domain (CTD) of Pol II subunit Polr2A/Rbp1 and Spt5, and (2) degrading the exiting nascent RNA transcript via endonuclease activity. The integrator complex is also involved in the 3'-end processing of the U7 snRNA, and also the spliceosomal snRNAs U1, U2, U4 and U5. Required for the normal expression of the Integrator complex component IntS1. This is Integrator complex subunit 12 from Drosophila melanogaster (Fruit fly).